We begin with the raw amino-acid sequence, 246 residues long: MTSSVSRPSGRRADELRKVALTRHYTKHAEGSVLVEFGDTKVLCTASVAERVPEFLRERGQGWLTAEYGMLPRATHTRSDREAARGKQTGRTQEIQRLIGRALRAVFDLEALGPRTLHIDCDVIQADGGTRTASITGAFVAAHDAVSTLIAAGKLTRSPITDHVAAISVGVYEGAPVLDLDYAEDSRCDTDMNVVMTGAGGFVEVQGTAEGVPFSRAEMNALLDLAQGGIAELVQLQKDVLGASHA.

Residues arginine 91 and 129-131 (GTR) contribute to the phosphate site.

This sequence belongs to the RNase PH family. In terms of assembly, homohexameric ring arranged as a trimer of dimers.

It catalyses the reaction tRNA(n+1) + phosphate = tRNA(n) + a ribonucleoside 5'-diphosphate. In terms of biological role, phosphorolytic 3'-5' exoribonuclease that plays an important role in tRNA 3'-end maturation. Removes nucleotide residues following the 3'-CCA terminus of tRNAs; can also add nucleotides to the ends of RNA molecules by using nucleoside diphosphates as substrates, but this may not be physiologically important. Probably plays a role in initiation of 16S rRNA degradation (leading to ribosome degradation) during starvation. This is Ribonuclease PH from Burkholderia cenocepacia (strain ATCC BAA-245 / DSM 16553 / LMG 16656 / NCTC 13227 / J2315 / CF5610) (Burkholderia cepacia (strain J2315)).